Consider the following 500-residue polypeptide: L-arabinose isomerase (500 aa).

Residues E306, E333, H350, and H450 each contribute to the Mn(2+) site.

It belongs to the arabinose isomerase family. In terms of assembly, homohexamer. Mn(2+) is required as a cofactor.

It catalyses the reaction beta-L-arabinopyranose = L-ribulose. It functions in the pathway carbohydrate degradation; L-arabinose degradation via L-ribulose; D-xylulose 5-phosphate from L-arabinose (bacterial route): step 1/3. Catalyzes the conversion of L-arabinose to L-ribulose. In Escherichia coli (strain K12), this protein is L-arabinose isomerase (araA).